An 866-amino-acid chain; its full sequence is Protein aubergine (866 aa).

An N-acetylmethionine modification is found at M1. A disordered region spans residues 1-61 (MNLPPNPVIA…GGGDAQVGPS (61 aa)). Symmetric dimethylarginine is present on residues R11, R13, R15, and R17. Over residues 46–56 (ASGGNGGGGDA) the composition is skewed to gly residues. Positions 281–390 (TLYNILSDAI…IIPELARATG (110 aa)) constitute a PAZ domain. The Piwi domain maps to 555–852 (IVMVVMRSPN…LAFLVAESIN (298 aa)).

Belongs to the argonaute family. Piwi subfamily. Component of the ping-pong piRNA processing (4P) complex consisting of krimp, aub and AGO3. Interacts (via N-terminus when symmetrically dimethylated on arginine residues) with krimp (via tudor domain); this interaction requires methylation of at least one N-terminal arginie residue. Interacts with vas and AGO3. May form part of a piRNA processing complex consisting of tud, aub and AGO3. Interacts (when symmetrically dimethylated on arginine residues) with tud; methylation and/or interaction requires association with piRNA. Interacts (via N-terminus and when associated with piRNA) with csul/PRMT5; the interaction recruits the PRMT5 methylosome complex to modify N-terminal arginines by symmetrical dimethylation but involves residues other than the arginines to be modified. Forms a complex with smg, twin, AGO3, nanos mRNA and piRNAs that targets the nanos 3'-untranslated region, in early embryos. Interacts with nanos mRNA and rump (in an RNA-dependent manner). Interacts with papi and vret. Interacts with me31B. In terms of processing, symmetrical dimethylation of arginines (sDMA) on Arg-11, Arg-13 and/or Arg-15 by csul/PRMT5/DART5, is required for binding to tud, localization to the pole plasm and association with the correct piRNAs. SDMA on Arg-11, Arg-13, Arg-15 and/or Arg-17 is required for binding to krimp and stable recruitment to subregions of the nuage. Methylation state does not affect protein stability. SDMA plays an important role in ping-pong amplification of piRNAs and is essential for function in vivo. Methylation state functions as an indicator of its piRNA binding state. PiRNA binding promotes sDMA modification; piRNA binding induces a conformational change that exposes the N-terminal arginines, making them available to the methylosome complex. In terms of tissue distribution, expressed in ovary. In the germarium, found in germline stem and cyst cells. In egg chambers from stage 6, expressed both in nurse cells and oocytes. In embryos, accumulates in the pole cells, although low expression is detected throughout the entire embryo. In testis, expressed in germline stem cells, gonialblast and spermatogonia cells (at protein level). In the adult brain, expressed in the ellipsoid body, the mushroom body subdivision in the peduncle and the cell body layer. Expressed specifically in alpha'/beta' and gamma neurons.

It localises to the cytoplasm. Its subcellular location is the cytosol. It is found in the perinuclear region. The protein localises to the cytoplasmic ribonucleoprotein granule. Functionally, component of the perinuclear meiotic nuage, a germline-specific subcellular membraneless ribonucleoprotein compartment involved in production of transposable element-repressing Piwi-interacting RNA (piRNA)-induced silencing complexes (piRISCs), which are essential for maintaining germline integrity during oogenesis; essential for the formation and/or structural integrity of nuage particles. Acts via the Piwi-interacting RNA (piRNA) metabolic process, which mediates the repression of transposable elements during meiosis by forming complexes composed of piRNAs and Piwi proteins and governs the methylation and subsequent repression of transposons. Directly binds piRNAs, a class of 24 to 30 nucleotide RNAs that are generated by a Dicer-independent mechanism and are primarily derived from transposons and other repeated sequence elements. Shows RNA cleavage or slicer activity; including aub-piRNA complexes from ovary and testis. When loaded with guide piRNAs recognizes and cleaves complementary RNAs to repress their expression and produce complementary piRNAs. Together with Piwi protein AGO3 recruited to subregions of the perinuclear nuage by krimp, which coordinates their activity in the ping-pong amplification step of secondary piRNA biogenesis. Krimp recruits piRNA bound aub and unbound AGO3, bringing them into close proximity to facilitate the loading onto AGO3 of freshly cut piRNAs generated by aub cleavage of target sequences; krimp recognizes the piRNA loading state of the Piwi proteins via symmetrically dimethylated arginine modification in their N-terminus. Important for asymmetric ping-pong amplification to bias production towards antisense piRNAs capable of silencing transposable elements. Required for the localization of mael and krimp to the meiotic nuage. In ovary, associates predominantly with antisense piRNAs that contain uridine at their 5' end. In testis, associates with Su(Ste) antisense piRNAs (most abundant class of piRNAs found in complex with aub in testes) and negatively regulates Ste expression, most likely by cleaving its transcripts. Also in testis, may repress translation of vas when associated with a piRNA derived from chromosome X, termed AT-chX-1, whose sequence shows strong complementarity to vas mRNA. Involved in repression of long interspersed nuclear elements (LINEs) including HeT-A, I-element and TART LINEs. Repression of specialized telomeric retroelements HeT-A and TART is involved in telomere regulation; Drosophila telomeres being maintained by transposition of specialized telomeric retroelements. Also involved in telomeric trans-silencing, a repression mechanism by which a transposon or a transgene inserted in subtelomeric heterochromatin has the capacity to repress in trans, in the female germline, a homologous transposon, or transgene located in euchromatin. Involved in the suppression of meiotic drive of sex chromosomes and autosomes. Involved in transposon silencing in the adult brain. Required for dorsal-ventral as well as anterior-posterior patterning of the egg. Required during oogenesis for primordial germ cell formation and activation of RNA interference. During early oogenesis, required for osk mRNA silencing and polarization of the microtubule cytoskeleton. During mid-oogenesis, required for osk mRNA localization to the posterior pole and efficient translation of osk and grk. During embryogenesis, required for posterior localization of nanos (nos) mRNA, independently of osk, and pole cell formation. Forms a complex with smg, twin, AGO3 and specific piRNAs that targets nanos mRNA (and probably other maternal mRNAS) for deadenylation promoting its decay during early embryogenesis. The polypeptide is Protein aubergine (Drosophila melanogaster (Fruit fly)).